The sequence spans 390 residues: GTPase Obg (390 aa).

The Obg domain maps to 1-159 (MKFVDEAVIR…RHLRLELLLL (159 aa)). The segment at 22 to 42 (SFRTEKYVPRGGPDGGDGGDG) is disordered. Gly residues predominate over residues 33 to 42 (GPDGGDGGDG). Residues 160-333 (ADVGMLGLPN…LTYNLMTTIE (174 aa)) form the OBG-type G domain. GTP-binding positions include 166–173 (GLPNAGKS), 191–195 (FTTLI), 213–216 (DIPG), 283–286 (NKVD), and 314–316 (SAL). The Mg(2+) site is built by Ser-173 and Thr-193.

It belongs to the TRAFAC class OBG-HflX-like GTPase superfamily. OBG GTPase family. As to quaternary structure, monomer. Mg(2+) is required as a cofactor.

Its subcellular location is the cytoplasm. Its function is as follows. An essential GTPase which binds GTP, GDP and possibly (p)ppGpp with moderate affinity, with high nucleotide exchange rates and a fairly low GTP hydrolysis rate. Plays a role in control of the cell cycle, stress response, ribosome biogenesis and in those bacteria that undergo differentiation, in morphogenesis control. The polypeptide is GTPase Obg (Photobacterium profundum (strain SS9)).